The chain runs to 299 residues: Inactive recombination-promoting nuclease-like protein RpnE (299 aa).

This sequence belongs to the Rpn/YhgA-like nuclease family.

Functionally, upon expression has no effect on RecA-independent DNA recombination, cell viability or DNA damage. In Escherichia coli (strain K12), this protein is Inactive recombination-promoting nuclease-like protein RpnE (yfaD).